A 242-amino-acid polypeptide reads, in one-letter code: Pyridoxine 5'-phosphate synthase (242 aa).

A 3-amino-2-oxopropyl phosphate-binding site is contributed by asparagine 6. Aspartate 8–histidine 9 serves as a coordination point for 1-deoxy-D-xylulose 5-phosphate. Arginine 17 is a binding site for 3-amino-2-oxopropyl phosphate. Histidine 42 (proton acceptor) is an active-site residue. 2 residues coordinate 1-deoxy-D-xylulose 5-phosphate: arginine 44 and histidine 49. Glutamate 69 (proton acceptor) is an active-site residue. Threonine 99 contacts 1-deoxy-D-xylulose 5-phosphate. Histidine 190 (proton donor) is an active-site residue. 3-amino-2-oxopropyl phosphate contacts are provided by residues glycine 191 and glycine 212–histidine 213.

This sequence belongs to the PNP synthase family. As to quaternary structure, homooctamer; tetramer of dimers.

It localises to the cytoplasm. The enzyme catalyses 3-amino-2-oxopropyl phosphate + 1-deoxy-D-xylulose 5-phosphate = pyridoxine 5'-phosphate + phosphate + 2 H2O + H(+). Its pathway is cofactor biosynthesis; pyridoxine 5'-phosphate biosynthesis; pyridoxine 5'-phosphate from D-erythrose 4-phosphate: step 5/5. Its function is as follows. Catalyzes the complicated ring closure reaction between the two acyclic compounds 1-deoxy-D-xylulose-5-phosphate (DXP) and 3-amino-2-oxopropyl phosphate (1-amino-acetone-3-phosphate or AAP) to form pyridoxine 5'-phosphate (PNP) and inorganic phosphate. The sequence is that of Pyridoxine 5'-phosphate synthase from Neisseria meningitidis serogroup C.